We begin with the raw amino-acid sequence, 458 residues long: Serine protease Do-like HtrB (458 aa).

Residues 1–18 (MDYRRDGQNDQHQTEPSH) are compositionally biased toward basic and acidic residues. Residues 1–42 (MDYRRDGQNDQHQTEPSHTEQQNTENQKLIGHSEQELLDAPV) form a disordered region. The Cytoplasmic segment spans residues 1 to 71 (MDYRRDGQND…TAVKKEKKRR (71 aa)). A helical membrane pass occupies residues 72–92 (AAWLSPILGGIIGGGLMLGIA). Topologically, residues 93-458 (PYLPSDQNQA…LTKQTESSSS (366 aa)) are extracellular. Positions 146-170 (QTSQNNTFGTGGGSSSESESGTGSG) are disordered. Residues histidine 187, aspartate 217, and serine 298 each act as charge relay system in the active site. Substrate contacts are provided by residues 296 to 298 (GNS) and 352 to 356 (LGVQM). Positions 356–440 (MIDMSQVPET…KTTIQVLRKG (85 aa)) constitute a PDZ domain.

The protein belongs to the peptidase S1C family.

The protein localises to the cell membrane. The enzyme catalyses Acts on substrates that are at least partially unfolded. The cleavage site P1 residue is normally between a pair of hydrophobic residues, such as Val-|-Val.. Degrades abnormal exported proteins and responsible for the propeptide processing of a natural pro-protein and for the maturation of a native protein. It also plays a prominent role in stress (heat shock, ethanol, puromycin and NaCl) resistance during active exponential growth. The chain is Serine protease Do-like HtrB (htrB) from Bacillus subtilis (strain 168).